Here is a 313-residue protein sequence, read N- to C-terminus: Chemotaxis protein CheV2 (313 aa).

The 157-residue stretch at 16–172 (EAQFLCFRLD…VEKMISDVFP (157 aa)) folds into the CheW-like domain. The Response regulatory domain maps to 193-313 (LILIAEDSLS…IHEMLKKTLS (121 aa)). At Asp-246 the chain carries 4-aspartylphosphate.

Phosphorylated; probably by transfer of CheAY phosphate group.

Functionally, plays a role in chemotaxis signal transduction system in order to colonize the host stomach. May act as a phosphate sink to control the flow of phosphate to CheAY. The sequence is that of Chemotaxis protein CheV2 from Helicobacter pylori (strain ATCC 700392 / 26695) (Campylobacter pylori).